A 1407-amino-acid polypeptide reads, in one-letter code: JmjC domain-containing histone demethylation protein 1 (1407 aa).

Disordered regions lie at residues M1–I86 and P98–S151. Composition is skewed to basic and acidic residues over residues D55–S67 and P125–S140. Over residues S141–F150 the composition is skewed to polar residues. The PHD-type zinc-finger motif lies at Q323–I382. Residues V577–K735 form the JmjC domain. A substrate-binding site is contributed by T628. Residues H631 and D633 each contribute to the Fe cation site. A substrate-binding site is contributed by K648. H703 provides a ligand contact to Fe cation. Disordered stretches follow at residues K893–K987, K1004–P1027, I1122–V1183, and D1252–L1389. 2 stretches are compositionally biased toward basic and acidic residues: residues L896–D914 and L928–K938. The segment covering N1008–P1027 has biased composition (polar residues). The segment covering M1254–G1264 has biased composition (basic and acidic residues). Residues P1273–P1284 are compositionally biased toward low complexity. Basic and acidic residues predominate over residues R1285–F1296. Residues A1297 to S1349 show a composition bias toward low complexity.

This sequence belongs to the JHDM1 histone demethylase family. Fe(2+) serves as cofactor.

It localises to the nucleus. It carries out the reaction N(6),N(6)-dimethyl-L-lysyl(36)-[histone H3] + 2 2-oxoglutarate + 2 O2 = L-lysyl(36)-[histone H3] + 2 formaldehyde + 2 succinate + 2 CO2. Its function is as follows. Histone demethylase that specifically demethylates 'Lys-36' of histone H3, thereby playing a central role in histone code. This chain is JmjC domain-containing histone demethylation protein 1 (jhd1), found in Emericella nidulans (strain FGSC A4 / ATCC 38163 / CBS 112.46 / NRRL 194 / M139) (Aspergillus nidulans).